A 319-amino-acid polypeptide reads, in one-letter code: 2-dehydropantoate 2-reductase (319 aa).

NADP(+) is bound by residues G10–G15 and N105. Position 105 (N105) interacts with substrate. The Proton donor role is filled by K192. Positions 196, 200, and 262 each coordinate substrate. E274 contributes to the NADP(+) binding site.

The protein belongs to the ketopantoate reductase family.

It localises to the cytoplasm. It carries out the reaction (R)-pantoate + NADP(+) = 2-dehydropantoate + NADPH + H(+). The protein operates within cofactor biosynthesis; (R)-pantothenate biosynthesis; (R)-pantoate from 3-methyl-2-oxobutanoate: step 2/2. Catalyzes the NADPH-dependent reduction of ketopantoate into pantoic acid. This is 2-dehydropantoate 2-reductase from Nostoc sp. (strain PCC 7120 / SAG 25.82 / UTEX 2576).